Reading from the N-terminus, the 81-residue chain is Gamma-conotoxin-like TeA53 (81 aa).

The first 19 residues, 1-19, serve as a signal peptide directing secretion; the sequence is MQKLTILLLVAAVLMSTQA. A propeptide spanning residues 20 to 42 is cleaved from the precursor; the sequence is LNQEQHQRAKINLLSKRKPPAER. 3 disulfides stabilise this stretch: Cys-49-Cys-63, Cys-56-Cys-67, and Cys-62-Cys-72.

The protein belongs to the conotoxin O2 superfamily. In terms of tissue distribution, expressed by the venom duct.

The protein resides in the secreted. Its function is as follows. Gamma-conotoxins may act on voltage-gated non-specific cation pacemaker channels (HCN). This Conus textile (Cloth-of-gold cone) protein is Gamma-conotoxin-like TeA53.